The sequence spans 118 residues: Small ribosomal subunit protein uS13 (118 aa).

Residues 91–118 (HRRGLPVRGQRTKTNARTRKGPRKPIKK) form a disordered region.

The protein belongs to the universal ribosomal protein uS13 family. In terms of assembly, part of the 30S ribosomal subunit. Forms a loose heterodimer with protein S19. Forms two bridges to the 50S subunit in the 70S ribosome.

Functionally, located at the top of the head of the 30S subunit, it contacts several helices of the 16S rRNA. In the 70S ribosome it contacts the 23S rRNA (bridge B1a) and protein L5 of the 50S subunit (bridge B1b), connecting the 2 subunits; these bridges are implicated in subunit movement. Contacts the tRNAs in the A and P-sites. This is Small ribosomal subunit protein uS13 from Sodalis glossinidius (strain morsitans).